A 282-amino-acid polypeptide reads, in one-letter code: Sirohydrochlorin cobaltochelatase CbiKC (282 aa).

The active-site Proton acceptor is the H166. Co(2+) is bound by residues H166 and H228.

This sequence belongs to the CbiK family.

It is found in the cytoplasm. The catalysed reaction is Co-sirohydrochlorin + 2 H(+) = sirohydrochlorin + Co(2+). It carries out the reaction siroheme + 2 H(+) = sirohydrochlorin + Fe(2+). Its pathway is cofactor biosynthesis; adenosylcobalamin biosynthesis; cob(II)yrinate a,c-diamide from sirohydrochlorin (anaerobic route): step 1/10. It functions in the pathway porphyrin-containing compound metabolism; siroheme biosynthesis; siroheme from sirohydrochlorin: step 1/1. Catalyzes the insertion of Co(2+) into sirohydrochlorin as part of the anaerobic pathway to cobalamin biosynthesis. To a lesser extent, is also able to insert Fe(2+) into sirohydrochlorin, yielding siroheme. The protein is Sirohydrochlorin cobaltochelatase CbiKC (cbiKc) of Nitratidesulfovibrio vulgaris (strain ATCC 29579 / DSM 644 / CCUG 34227 / NCIMB 8303 / VKM B-1760 / Hildenborough) (Desulfovibrio vulgaris).